Here is a 294-residue protein sequence, read N- to C-terminus: MLTFSDMLLKLQQFWAEQGCNIVQPYDIPAGAGTFHPATLLRSLDSKPWAAAYVAPSRRPTDGRYGENPNRLGAYYQFQALIKPSPDNIQELYLKSLEYLGLNLKEHDIRFVEDNWESPTLGAWGLGWEVWLDGMEVTQFTYFQQVGGIACDPVAVEITYGTERLAMYLQGVESVFDIVWNRNGDEVTTYADVHKESEYEFSKYHFEVATVEKLFQHFEDASNECKLCLEVGLPLPAYDQCMIASHAFNVLDARKAISQAQRQNYILKVRELSIGCAQLYKAQEEERNQRVRGT.

The protein belongs to the class-II aminoacyl-tRNA synthetase family. Tetramer of two alpha and two beta subunits.

It localises to the cytoplasm. The enzyme catalyses tRNA(Gly) + glycine + ATP = glycyl-tRNA(Gly) + AMP + diphosphate. The sequence is that of Glycine--tRNA ligase alpha subunit from Sulfurovum sp. (strain NBC37-1).